The sequence spans 96 residues: uncharacterized protein (96 aa).

Residues 1–19 form the signal peptide; the sequence is MKQIIPALITLSFSPMAIA.

This is an uncharacterized protein from Synechocystis sp. (strain ATCC 27184 / PCC 6803 / Kazusa).